Reading from the N-terminus, the 728-residue chain is Catalase-peroxidase 1 (728 aa).

A cross-link (tryptophyl-tyrosyl-methioninium (Trp-Tyr) (with M-244)) is located at residues 91–218 (WHSAGTYRTA…LAAVQMGLIY (128 aa)). Catalysis depends on His92, which acts as the Proton acceptor. Residues 218–244 (YVNPEGPDGNPDPVAAARDIRDTFARM) constitute a cross-link (tryptophyl-tyrosyl-methioninium (Tyr-Met) (with W-91)). His259 serves as a coordination point for heme b.

The protein belongs to the peroxidase family. Peroxidase/catalase subfamily. In terms of assembly, homodimer or homotetramer. Heme b serves as cofactor. In terms of processing, formation of the three residue Trp-Tyr-Met cross-link is important for the catalase, but not the peroxidase activity of the enzyme.

It catalyses the reaction H2O2 + AH2 = A + 2 H2O. The catalysed reaction is 2 H2O2 = O2 + 2 H2O. In terms of biological role, bifunctional enzyme with both catalase and broad-spectrum peroxidase activity. The polypeptide is Catalase-peroxidase 1 (Burkholderia ambifaria (strain MC40-6)).